Consider the following 340-residue polypeptide: Phenylalanine--tRNA ligase alpha subunit (340 aa).

Mg(2+) is bound at residue Glu258.

The protein belongs to the class-II aminoacyl-tRNA synthetase family. Phe-tRNA synthetase alpha subunit type 1 subfamily. Tetramer of two alpha and two beta subunits. Requires Mg(2+) as cofactor.

Its subcellular location is the cytoplasm. The catalysed reaction is tRNA(Phe) + L-phenylalanine + ATP = L-phenylalanyl-tRNA(Phe) + AMP + diphosphate + H(+). The polypeptide is Phenylalanine--tRNA ligase alpha subunit (Corynebacterium glutamicum (strain ATCC 13032 / DSM 20300 / JCM 1318 / BCRC 11384 / CCUG 27702 / LMG 3730 / NBRC 12168 / NCIMB 10025 / NRRL B-2784 / 534)).